A 365-amino-acid polypeptide reads, in one-letter code: Outer capsid protein sigma-3 (365 aa).

The segment at 51–73 (CMHCLGVVGSLQRKLKHLPHHRC) adopts a CCHC-type zinc-finger fold.

Belongs to the orthoreovirus sigma-3 protein family. Heterohexamer of three sigma-3 and three Mu-1 proteins. The RNA-binding form is probably a homodimer. Cleaved during virus the endosomal proteolytic disassembly of the outer capsid.

The protein localises to the virion. Its function is as follows. Stimulates translation by blocking the activation of the dsRNA-dependent protein kinase EIF2AK2/PKR, thereby inhibiting the host interferon response. Sigma3 prevents the activation of EIF2AK2 by competing with the kinase for dsRNA-binding. In terms of biological role, the viral outer shell polypeptides, of which sigma-3 is one, impose structural constraints that prevent elongation of nascent transcripts by the RNA-dependent RNA polymerase lambda-3. In Mammalia (T1L), this protein is Outer capsid protein sigma-3 (S4).